Reading from the N-terminus, the 518-residue chain is Membrane-bound glycerophospholipid O-acyltransferase 2 (518 aa).

6 helical membrane passes run 21–41, 60–80, 87–107, 183–203, 230–250, and 267–283; these read PVDQVNFVVCQLFALLAAIWF, TLLGLYLALFCFGWYALHFVI, YLMIIIGVENMHKYCFVFALG, FMGILAGPLCSYKDYITFIEG, IAVAQKLLICGLSLLFHMTIT, and ASWPVRVFYLYLSLMAA. Catalysis depends on residues asparagine 341 and histidine 372. The next 3 membrane-spanning stretches (helical) occupy residues 365 to 385, 415 to 435, and 443 to 463; these read FILSAIWHGVYPGYYLTFLTG, IITWMTTQVAISYTVVPFVLL, and FYSSCYFCLHIASILVLLVFP.

Belongs to the membrane-bound acyltransferase family.

The protein localises to the endoplasmic reticulum membrane. It carries out the reaction a 1-acyl-sn-glycero-3-phosphocholine + an acyl-CoA = a 1,2-diacyl-sn-glycero-3-phosphocholine + CoA. The enzyme catalyses a 1-acyl-sn-glycero-3-phosphoethanolamine + an acyl-CoA = a 1,2-diacyl-sn-glycero-3-phosphoethanolamine + CoA. The catalysed reaction is a 1-acyl-sn-glycero-3-phosphate + an acyl-CoA = a 1,2-diacyl-sn-glycero-3-phosphate + CoA. It catalyses the reaction (9Z)-hexadecenoyl-CoA + 1-hexadecanoyl-sn-glycero-3-phosphocholine = 1-hexadecanoyl-2-(9Z-hexadecenoyl)-sn-glycero-3-phosphocholine + CoA. It carries out the reaction 1-hexadecanoyl-sn-glycero-3-phosphoethanolamine + (9Z)-octadecenoyl-CoA = 1-hexadecanoyl-2-(9Z-octadecenoyl)-sn-glycero-3-phosphoethanolamine + CoA. The enzyme catalyses 1-hexadecanoyl-sn-glycero-3-phosphoethanolamine + (9Z)-hexadecenoyl-CoA = 1-hexadecanoyl-2-(9Z)-hexadecenoyl-sn-glycero-3-phosphoethanolamine + CoA. The catalysed reaction is 1-(9Z-octadecenoyl)-sn-glycero-3-phospho-L-serine + hexadecanoyl-CoA = 1-(9Z)-octadecenoyl-2-hexadecanoyl-sn-glycero-3-phosphoserine + CoA. It catalyses the reaction (9Z,12Z)-octadecadienoyl-CoA + 1-hexadecanoyl-sn-glycero-3-phosphocholine = 1-hexadecanoyl-2-(9Z,12Z-octadecadienoyl)-sn-glycero-3-phosphocholine + CoA. It carries out the reaction 1-hexadecanoyl-sn-glycero-3-phosphocholine + (9Z)-octadecenoyl-CoA = 1-hexadecanoyl-2-(9Z-octadecenoyl)-sn-glycero-3-phosphocholine + CoA. The enzyme catalyses 1-hexadecanoyl-sn-glycero-3-phosphate + (9Z)-hexadecenoyl-CoA = 1-hexadecanoyl-2-[(9Z)-hexadec-9-enoyl]-sn-glycero-3-phosphate + CoA. The catalysed reaction is 1-hexadecanoyl-sn-glycero-3-phosphate + (9Z)-octadecenoyl-CoA = 1-hexadecanoyl-2-(9Z-octadecenoyl)-sn-glycero-3-phosphate + CoA. It catalyses the reaction a 1-O-(1Z-alkenyl)-sn-glycero-3-phosphocholine + (9Z)-octadecenoyl-CoA = 1-O-(1Z)-alkenyl-2-(9Z)-octadecenoyl-sn-glycero-3-phosphocholine + CoA. It carries out the reaction a 1-O-(1Z-alkenyl)-sn-glycero-3-phosphoethanolamine + (9Z)-octadecenoyl-CoA = 1-O-(1Z)-alkenyl-2-(9Z)-octadecenoyl-sn-glycero-3-phosphoethanolamine + CoA. The enzyme catalyses 1-octadecanoyl-sn-glycero-3-phosphoethanolamine + (9Z)-octadecenoyl-CoA = 1-octadecanoyl-2-(9Z-octadecenoyl)-sn-glycero-3-phosphoethanolamine + CoA. The catalysed reaction is 1-octadecanoyl-sn-glycero-3-phosphocholine + (9Z)-octadecenoyl-CoA = 1-octadecanoyl-2-(9Z-octadecenoyl)-sn-glycero-3-phosphocholine + CoA. It catalyses the reaction 1-(9Z-octadecenoyl)-sn-glycero-3-phosphoethanolamine + (9Z)-octadecenoyl-CoA = 1,2-di-(9Z-octadecenoyl)-sn-glycero-3-phosphoethanolamine + CoA. The protein operates within lipid metabolism; phospholipid metabolism. In terms of biological role, acyltransferase which catalyzes the transfer of an acyl group from an acyl-CoA to a lysophospholipid leading to the production of a phospholipid and participates in the reacylation step of the phospholipid remodeling pathway also known as the Lands cycle. May catalyze preferentially the acylation of lysophosphatidylethanolamine (1-acyl-sn-glycero-3-phosphoethanolamine or LPE) and lysophosphatidic acid (LPA) and to a lesser extend lysophosphatidylcholine (LPC) and lysophosphatidylserine (LPS). Prefers oleoyl-CoA as the acyl donor. This is Membrane-bound glycerophospholipid O-acyltransferase 2 from Gallus gallus (Chicken).